A 217-amino-acid chain; its full sequence is Endo-1,4-beta-xylanase (217 aa).

The N-terminal stretch at 1-17 is a signal peptide; sequence MQFLIPVVILCVSLVDS. A GH11 domain is found at 20 to 217; the sequence is VLYNNEIGFN…SSGFADITVS (198 aa). N-linked (GlcNAc...) asparagine glycans are attached at residues N56 and N80. E107 serves as the catalytic Nucleophile. The Proton donor role is filled by E204.

It belongs to the glycosyl hydrolase 11 (cellulase G) family. Expressed in larval carcasses and gut, and adult gut.

The protein localises to the secreted. The enzyme catalyses Endohydrolysis of (1-&gt;4)-beta-D-xylosidic linkages in xylans.. It functions in the pathway glycan degradation; xylan degradation. The protein is Endo-1,4-beta-xylanase of Phaedon cochleariae (Mustard beetle).